The following is a 37-amino-acid chain: Cytochrome b6-f complex subunit 5 (37 aa).

A helical transmembrane segment spans residues 5 to 25; sequence ILLGIVLGMVLVTLAGLFVAA.

The protein belongs to the PetG family. As to quaternary structure, the 4 large subunits of the cytochrome b6-f complex are cytochrome b6, subunit IV (17 kDa polypeptide, PetD), cytochrome f and the Rieske protein, while the 4 small subunits are PetG, PetL, PetM and PetN. The complex functions as a dimer.

Its subcellular location is the cellular thylakoid membrane. Component of the cytochrome b6-f complex, which mediates electron transfer between photosystem II (PSII) and photosystem I (PSI), cyclic electron flow around PSI, and state transitions. PetG is required for either the stability or assembly of the cytochrome b6-f complex. The sequence is that of Cytochrome b6-f complex subunit 5 from Synechococcus sp. (strain JA-3-3Ab) (Cyanobacteria bacterium Yellowstone A-Prime).